The following is a 446-amino-acid chain: Rhoptry surface protein CERLI1 (446 aa).

Residues 39–208 enclose the C2 domain; that stretch reads KPIGQLYRLM…NQTKNNEKIE (170 aa). The PH domain maps to 252 to 363; that stretch reads GYLLHSNFYI…ILVSNYKRER (112 aa).

Its subcellular location is the cytoplasmic vesicle. The protein resides in the secretory vesicle. It localises to the rhoptry membrane. Functionally, essential for merozoite invasion of host cells by controlling rhoptry secretion. Binds to phosphatidic acid (PA) and phosphatidylinositol 4,5-bisphosphate (PIP2) lipids and thus, likely contributes to the assembly of the machinery that docks or primes the rhoptry to the parasite cell membrane prior to the fusion with the host cell membrane. The sequence is that of Rhoptry surface protein CERLI1 from Plasmodium falciparum (isolate 3D7).